We begin with the raw amino-acid sequence, 441 residues long: Ribosomal protein uS12 methylthiotransferase RimO (441 aa).

The region spanning 7–117 (PKVSFVSLGC…VLDAVHRALP (111 aa)) is the MTTase N-terminal domain. Positions 16, 52, 81, 148, 152, and 155 each coordinate [4Fe-4S] cluster. One can recognise a Radical SAM core domain in the interval 134 to 371 (LTPRHYAYLK…MARQQKISAR (238 aa)). The TRAM domain maps to 374 to 440 (KRKVGTRQQV…AYDLHGSVAG (67 aa)).

This sequence belongs to the methylthiotransferase family. RimO subfamily. [4Fe-4S] cluster serves as cofactor.

The protein resides in the cytoplasm. It carries out the reaction L-aspartate(89)-[ribosomal protein uS12]-hydrogen + (sulfur carrier)-SH + AH2 + 2 S-adenosyl-L-methionine = 3-methylsulfanyl-L-aspartate(89)-[ribosomal protein uS12]-hydrogen + (sulfur carrier)-H + 5'-deoxyadenosine + L-methionine + A + S-adenosyl-L-homocysteine + 2 H(+). Functionally, catalyzes the methylthiolation of an aspartic acid residue of ribosomal protein uS12. This Rhodopseudomonas palustris (strain BisB18) protein is Ribosomal protein uS12 methylthiotransferase RimO.